The primary structure comprises 225 residues: Protein-L-isoaspartate O-methyltransferase (225 aa).

Ser-75 is an active-site residue.

It belongs to the methyltransferase superfamily. L-isoaspartyl/D-aspartyl protein methyltransferase family.

The protein resides in the cytoplasm. It carries out the reaction [protein]-L-isoaspartate + S-adenosyl-L-methionine = [protein]-L-isoaspartate alpha-methyl ester + S-adenosyl-L-homocysteine. Its function is as follows. Catalyzes the methyl esterification of L-isoaspartyl residues in peptides and proteins that result from spontaneous decomposition of normal L-aspartyl and L-asparaginyl residues. It plays a role in the repair and/or degradation of damaged proteins. This chain is Protein-L-isoaspartate O-methyltransferase, found in Xanthomonas euvesicatoria pv. vesicatoria (strain 85-10) (Xanthomonas campestris pv. vesicatoria).